The primary structure comprises 152 residues: Nascent polypeptide-associated complex subunit beta (152 aa).

Disordered stretches follow at residues 19–39 (IGKG…AGDD) and 125–152 (NMQK…SKVE). Positions 23-32 (TPRRKVKRAP) are enriched in basic residues. The NAC-A/B domain maps to 36 to 101 (AGDDKKLQAT…GEDKELTELV (66 aa)).

This sequence belongs to the NAC-beta family. As to quaternary structure, part of the nascent polypeptide-associated complex (NAC), consisting of npc-1/egd2 and npc-2/egd1. NAC associates with ribosomes via npc-2/egd1.

Its subcellular location is the cytoplasm. It is found in the nucleus. Its function is as follows. Component of the nascent polypeptide-associated complex (NAC), a dynamic component of the ribosomal exit tunnel, protecting the emerging polypeptides from interaction with other cytoplasmic proteins to ensure appropriate nascent protein targeting. The NAC complex also promotes mitochondrial protein import by enhancing productive ribosome interactions with the outer mitochondrial membrane and blocks the inappropriate interaction of ribosomes translating non-secretory nascent polypeptides with translocation sites in the membrane of the endoplasmic reticulum. Npc-2/egd1 may act as a transcription factor that exert a negative effect on the expression of several genes that are transcribed by RNA polymerase II. This chain is Nascent polypeptide-associated complex subunit beta (npc-2), found in Neurospora crassa (strain ATCC 24698 / 74-OR23-1A / CBS 708.71 / DSM 1257 / FGSC 987).